The chain runs to 365 residues: S-adenosylmethionine:tRNA ribosyltransferase-isomerase (365 aa).

Belongs to the QueA family. In terms of assembly, monomer.

It is found in the cytoplasm. The enzyme catalyses 7-aminomethyl-7-carbaguanosine(34) in tRNA + S-adenosyl-L-methionine = epoxyqueuosine(34) in tRNA + adenine + L-methionine + 2 H(+). The protein operates within tRNA modification; tRNA-queuosine biosynthesis. Functionally, transfers and isomerizes the ribose moiety from AdoMet to the 7-aminomethyl group of 7-deazaguanine (preQ1-tRNA) to give epoxyqueuosine (oQ-tRNA). This is S-adenosylmethionine:tRNA ribosyltransferase-isomerase from Rickettsia rickettsii (strain Iowa).